The chain runs to 124 residues: uncharacterized protein (124 aa).

A run of 3 helical transmembrane segments spans residues 14–34, 41–61, and 85–105; these read KAIVIESLLLVVFYLLIYGWQ, FSYGFLSAFLPFCTFIFIIFY, and MVFIIIAIKWLFVINFIAFFV.

The protein resides in the cell membrane. This is an uncharacterized protein from Haemophilus influenzae (strain ATCC 51907 / DSM 11121 / KW20 / Rd).